The sequence spans 384 residues: MAKHLFTSESVSEGHPDKIADQISDAVLDAILEQDPKARVACETYVKTGMVMVGGEITTSAWVDIEELTRETVREIGYVHSDMGFDANSCAVLNTIGKQSPDINQGVDKADPKEQGAGDQGIMFGYACNETEVLMPAPITYSHRLVEKQAEVRKNGTLPWLRPDAKSQVTFQYDQGKIVGIDAVVLSTQHCDSISTPDLREAVMEEIIKPVLPAEWISKDTNFFINPTGRFVIGGPMGDCGLTGRKIIVDTYGGAARHGGGAFSGKDPSKVDRSAAYAARYVAKNIVAAGMADRCEIQLSYAIGVADPTSIMVETFGTEKVSHDIIIEAVRQFFDLRPYGLQEMLNLLQPIYKKTAAYGHFGREEFPWEATDKAELLRDFAGIK.

ATP is bound at residue histidine 15. Residue aspartate 17 participates in Mg(2+) binding. Residue glutamate 43 participates in K(+) binding. L-methionine contacts are provided by glutamate 56 and glutamine 99. The flexible loop stretch occupies residues 99-109; that stretch reads QSPDINQGVDK. ATP-binding positions include 164 to 166, 230 to 231, aspartate 239, 245 to 246, alanine 262, and lysine 266; these read DAK, RF, and RK. An L-methionine-binding site is contributed by aspartate 239. Lysine 270 is a binding site for L-methionine.

This sequence belongs to the AdoMet synthase family. As to quaternary structure, homotetramer; dimer of dimers. Mg(2+) serves as cofactor. Requires K(+) as cofactor.

The protein localises to the cytoplasm. The enzyme catalyses L-methionine + ATP + H2O = S-adenosyl-L-methionine + phosphate + diphosphate. The protein operates within amino-acid biosynthesis; S-adenosyl-L-methionine biosynthesis; S-adenosyl-L-methionine from L-methionine: step 1/1. Functionally, catalyzes the formation of S-adenosylmethionine (AdoMet) from methionine and ATP. The overall synthetic reaction is composed of two sequential steps, AdoMet formation and the subsequent tripolyphosphate hydrolysis which occurs prior to release of AdoMet from the enzyme. In Vibrio parahaemolyticus serotype O3:K6 (strain RIMD 2210633), this protein is S-adenosylmethionine synthase.